Here is a 256-residue protein sequence, read N- to C-terminus: MVSWMISRSVVLVFGNLYPAYYSYKAVKTKNVKEYVRWMMYWIVFALFTVVETVADLTIAWFPLYYEIKIAFVIWLLSPYTRGASVIYRKALHPLLSSKEREIDDYIVQAKERSYETMVNFGKQGLTIAATAAVSAAVKGQGAITEKLRSFSMHDLTQIPQDDGYSSYASNPARRAIMDQPDGAEYYHGDDDDRSDEDSKPVFSEDEAVSHHGLRRSQSVKVTRSKLRRDARYGSLKIKGRKRPGINATTYSNMES.

3 helical membrane-spanning segments follow: residues 1-21, 42-62, and 68-88; these read MVSW…YPAY, WIVF…IAWF, and IKIA…SVIY. The interval 177-256 is disordered; it reads IMDQPDGAEY…NATTYSNMES (80 aa). A compositionally biased stretch (polar residues) spans 247 to 256; the sequence is NATTYSNMES.

It belongs to the DP1 family.

The protein localises to the endoplasmic reticulum membrane. In terms of biological role, microtubule-binding protein required to ensure proper cell division and nuclear envelope reassembly by sequestering the endoplasmic reticulum away from chromosomes during mitosis. Probably acts by clearing the endoplasmic reticulum membrane from metaphase chromosomes. The protein is Receptor expression-enhancing protein 3 (reep3) of Danio rerio (Zebrafish).